Here is a 69-residue protein sequence, read N- to C-terminus: UPF0150 protein ssr1258 (69 aa).

This sequence belongs to the UPF0150 family.

The protein is UPF0150 protein ssr1258 of Synechocystis sp. (strain ATCC 27184 / PCC 6803 / Kazusa).